The primary structure comprises 91 residues: Metalloproteinase inhibitor 2 (91 aa).

Positions 1 to 91 (KAVSEKEVDS…FIVPWDTLST (91 aa)) constitute an NTR domain.

Belongs to the protease inhibitor I35 (TIMP) family. In terms of processing, the activity of TIMP2 is dependent on the presence of disulfide bonds.

It is found in the secreted. Its function is as follows. Complexes with metalloproteinases (such as collagenases) and irreversibly inactivates them. The protein is Metalloproteinase inhibitor 2 (TIMP2) of Equus caballus (Horse).